Here is a 246-residue protein sequence, read N- to C-terminus: DNA repair protein RecO (246 aa).

This sequence belongs to the RecO family.

Its function is as follows. Involved in DNA repair and RecF pathway recombination. The sequence is that of DNA repair protein RecO from Methylorubrum extorquens (strain PA1) (Methylobacterium extorquens).